A 100-amino-acid chain; its full sequence is MSEKRNIRDHKRRLLAAKYELRRKLYKAFCKDSDLPSDMRDKLRYKLSKLPRNSSFARVRNRCISTGRPRSVYELFRISRIVFRSLASRGPLMGIKKSSW.

This sequence belongs to the universal ribosomal protein uS14 family.

The protein localises to the mitochondrion. This chain is Small ribosomal subunit protein uS14m (RPS14), found in Vicia faba (Broad bean).